A 294-amino-acid polypeptide reads, in one-letter code: Endonuclease 3 (294 aa).

An N-terminal signal peptide occupies residues 1 to 24; sequence MGWSLRMWIVSILVLTQLVNGALC. Residues Trp-25 and His-30 each coordinate a divalent metal cation. Substrate is bound at residue 25 to 30; the sequence is WGDAGH. A disulfide bridge connects residues Cys-34 and Cys-65. Residues Asp-69 and His-84 each contribute to the a divalent metal cation site. Substrate contacts are provided by residues 69-75, 84-87, and 94-99; these read DEIKKLP, HFAD, and NYEYSR. Disulfide bonds link Cys-93/Cys-241, Cys-101/Cys-106, and Cys-221/Cys-228. 2 residues coordinate substrate: Asn-113 and Tyr-131. The N-linked (GlcNAc...) asparagine glycan is linked to Asn-113. N-linked (GlcNAc...) asparagine glycosylation is present at Asn-132. A divalent metal cation is bound by residues His-142, Asp-146, His-152, His-176, and Asp-180. Residues 142–191 are substrate binding; that stretch reads HYMGDIHQPLHEGFIGDLGGNKIKVHWYNQETNLHRVWDDMIIESALETY. N-linked (GlcNAc...) asparagine glycosylation is found at Asn-193, Asn-224, and Asn-247. Positions 279-294 are cleaved as a propeptide — removed in mature form; sequence GTLNRIFSAKRKLARA.

Belongs to the nuclease type I family. In terms of assembly, monomer. Requires Zn(2+) as cofactor. Mn(2+) serves as cofactor.

It catalyses the reaction Endonucleolytic cleavage to 5'-phosphomononucleotide and 5'-phosphooligonucleotide end-products.. In terms of biological role, endonuclease that can use RNA and single-stranded DNA as substrates. In contradiction with PubMed:23620482, cannot hydrolyze single-stranded DNA and does not cleave mismatches. This is Endonuclease 3 from Arabidopsis thaliana (Mouse-ear cress).